The sequence spans 199 residues: FMN-dependent NADH:quinone oxidoreductase 2 (199 aa).

Residues serine 10, 17-19 (SDS), and 135-138 (TKGG) contribute to the FMN site.

This sequence belongs to the azoreductase type 1 family. As to quaternary structure, homodimer. The cofactor is FMN.

The catalysed reaction is 2 a quinone + NADH + H(+) = 2 a 1,4-benzosemiquinone + NAD(+). It carries out the reaction N,N-dimethyl-1,4-phenylenediamine + anthranilate + 2 NAD(+) = 2-(4-dimethylaminophenyl)diazenylbenzoate + 2 NADH + 2 H(+). In terms of biological role, quinone reductase that provides resistance to thiol-specific stress caused by electrophilic quinones. Functionally, also exhibits azoreductase activity. Catalyzes the reductive cleavage of the azo bond in aromatic azo compounds to the corresponding amines. The polypeptide is FMN-dependent NADH:quinone oxidoreductase 2 (Mesoplasma florum (strain ATCC 33453 / NBRC 100688 / NCTC 11704 / L1) (Acholeplasma florum)).